A 299-amino-acid chain; its full sequence is Lipoyl synthase (299 aa).

Residues C45, C50, C56, C71, C75, C78, and S284 each contribute to the [4Fe-4S] cluster site. One can recognise a Radical SAM core domain in the interval 57 to 273; it reads YSKGTATFMI…GDVALAKDFL (217 aa).

It belongs to the radical SAM superfamily. Lipoyl synthase family. The cofactor is [4Fe-4S] cluster.

Its subcellular location is the cytoplasm. The enzyme catalyses [[Fe-S] cluster scaffold protein carrying a second [4Fe-4S](2+) cluster] + N(6)-octanoyl-L-lysyl-[protein] + 2 oxidized [2Fe-2S]-[ferredoxin] + 2 S-adenosyl-L-methionine + 4 H(+) = [[Fe-S] cluster scaffold protein] + N(6)-[(R)-dihydrolipoyl]-L-lysyl-[protein] + 4 Fe(3+) + 2 hydrogen sulfide + 2 5'-deoxyadenosine + 2 L-methionine + 2 reduced [2Fe-2S]-[ferredoxin]. It participates in protein modification; protein lipoylation via endogenous pathway; protein N(6)-(lipoyl)lysine from octanoyl-[acyl-carrier-protein]: step 2/2. In terms of biological role, catalyzes the radical-mediated insertion of two sulfur atoms into the C-6 and C-8 positions of the octanoyl moiety bound to the lipoyl domains of lipoate-dependent enzymes, thereby converting the octanoylated domains into lipoylated derivatives. In Desulfotalea psychrophila (strain LSv54 / DSM 12343), this protein is Lipoyl synthase.